We begin with the raw amino-acid sequence, 319 residues long: Annexin A4 (319 aa).

Residue Ala-2 is modified to N-acetylalanine. Thr-7 carries the phosphothreonine; by PKC modification. The residue at position 12 (Ser-12) is a Phosphoserine. Annexin repeat units follow at residues 14-85 (FNAA…GMMT), 86-157 (PTVL…SLSA), 169-241 (ALVR…AIVK), and 245-316 (NKSA…ILCG). Lys-213, Lys-293, and Lys-300 each carry N6-acetyllysine.

It belongs to the annexin family. In terms of assembly, monomer.

The protein localises to the zymogen granule membrane. In terms of biological role, calcium/phospholipid-binding protein which promotes membrane fusion and is involved in exocytosis. The chain is Annexin A4 (ANXA4) from Sus scrofa (Pig).